The chain runs to 115 residues: Nucleoid-associated protein LA_4332 (115 aa).

This sequence belongs to the YbaB/EbfC family. As to quaternary structure, homodimer.

It localises to the cytoplasm. It is found in the nucleoid. Binds to DNA and alters its conformation. May be involved in regulation of gene expression, nucleoid organization and DNA protection. The polypeptide is Nucleoid-associated protein LA_4332 (Leptospira interrogans serogroup Icterohaemorrhagiae serovar Lai (strain 56601)).